The primary structure comprises 433 residues: Glutamate-rich protein 2 (433 aa).

Disordered regions lie at residues 56–86 (VPAAGTAPAPPPPRALRPAPGPPRSAPLAPP), 113–161 (DSAS…KHPQ), 189–273 (SRQN…SIET), 308–344 (CLEDIEENLSDSTDGDGEEDSNNEDDEGPAKKETRAP), and 394–433 (EKAQEEEEEEESDEDSSSESEVDSSEDGSEDSSDECEDGS). The span at 63 to 85 (PAPPPPRALRPAPGPPRSAPLAP) shows a compositional bias: pro residues. A compositionally biased stretch (polar residues) spans 114–127 (SASQARGSEPSSSA). Composition is skewed to basic and acidic residues over residues 199-214 (DPKEKLMSGSNKEKPQ) and 244-258 (ARKETSSKKIEDKVS). The span at 259 to 273 (LKSSENRPSSRSIET) shows a compositional bias: polar residues. Composition is skewed to acidic residues over residues 308–334 (CLEDIEENLSDSTDGDGEEDSNNEDDE) and 397–433 (QEEEEEEESDEDSSSESEVDSSEDGSEDSSDECEDGS).

This is Glutamate-rich protein 2 (Erich2) from Rattus norvegicus (Rat).